Reading from the N-terminus, the 589-residue chain is Aspartate--tRNA ligase (589 aa).

E175 provides a ligand contact to L-aspartate. The segment at 199–202 is aspartate; the sequence is QIFK. Residue R221 coordinates L-aspartate. Residues 221-223 and Q230 each bind ATP; that span reads RDE. Position 449 (H449) interacts with L-aspartate. E483 serves as a coordination point for ATP. R490 contacts L-aspartate. 535 to 538 is a binding site for ATP; sequence GLDR.

The protein belongs to the class-II aminoacyl-tRNA synthetase family. Type 1 subfamily. As to quaternary structure, homodimer.

Its subcellular location is the cytoplasm. It carries out the reaction tRNA(Asp) + L-aspartate + ATP = L-aspartyl-tRNA(Asp) + AMP + diphosphate. Its function is as follows. Catalyzes the attachment of L-aspartate to tRNA(Asp) in a two-step reaction: L-aspartate is first activated by ATP to form Asp-AMP and then transferred to the acceptor end of tRNA(Asp). The polypeptide is Aspartate--tRNA ligase (Shouchella clausii (strain KSM-K16) (Alkalihalobacillus clausii)).